The primary structure comprises 301 residues: Tetrapeptide repeat homeobox protein 2 (301 aa).

2 disordered regions span residues 1–27 (MQDPGHLQGPPLALDPPRRQRQERTVY) and 273–301 (SLSTTTSQYKEEDGFVDKNHSVPRSLLDL). 2 stretches are compositionally biased toward basic and acidic residues: residues 16–26 (PPRRQRQERTV) and 281–292 (YKEEDGFVDKNH). Residues 20 to 79 (QRQERTVYTESQQKVLEFYFQKDQYPNYDQRLNLAEMLSLREQQLQVWFKNRRAKLARER) constitute a DNA-binding region (homeobox).

The protein belongs to the paired homeobox family.

The protein resides in the nucleus. Functionally, transcription factor expressed after fertilization required for zygotic genome activation (ZGA), a critical event in early embryonic development during which the developmental control passes from maternally provided mRNAs to the expression of the zygotic genome after fertilization. Binds and activates expression of key ZGA marker genes, such as NANOGNB, ZSCAN4, DUXB, KLF5 and DPPA3. Binds to regulatory DNA sequences containing a 5'-TAATCC-3' sequence motif. This is Tetrapeptide repeat homeobox protein 2 from Homo sapiens (Human).